The primary structure comprises 421 residues: Bestrophin homolog 2 (421 aa).

4 helical membrane-spanning segments follow: residues 28–48, 73–93, 239–259, and 275–295; these read IWKAIYMETIIFLICYGIISV, LSFIPLEFVLGFFVTIVVDRW, LMYPQLVCLAVNLYFLVSIIA, and VYFPVMTFLQFIFYMGWLKVI.

The protein belongs to the anion channel-forming bestrophin (TC 1.A.46) family. Calcium-sensitive chloride channel subfamily. Forms oligomers.

It localises to the cell membrane. In terms of biological role, forms chloride channels. The chain is Bestrophin homolog 2 (best-2) from Caenorhabditis elegans.